We begin with the raw amino-acid sequence, 394 residues long: Putative F-box protein At5g66830 (394 aa).

An F-box domain is found at 17-63 (DWCWSKLPSDLMQFVFDRLGFADFQRAKSVCSSWLSVSRNSQPNNQI).

This Arabidopsis thaliana (Mouse-ear cress) protein is Putative F-box protein At5g66830.